Consider the following 2225-residue polypeptide: MAALVLEDGSVLQGRPFGAAVSTAGEVVFQTGMVGYPEALTDPSYKAQILVLTYPLIGNYGIPSDEEDEFGLSKWFESSENHVAGLVVGECCPTPSHWSATCTLHEWLQQHGIPGLQGVDTRELTKKLREQGSLLGKLVQSGTEPSTLPFVDPNARPLAPEVSIKTPRVFNAGGAPRICALDCGLKYNQIRCLCQLGAEVTVVPWNHELDSQKYDGLFLSNGPGDPASYPGVVATLNRVLSEPNPRPVFGICLGHQLLALAIGAKTYKMRYGNRGHNQPCLLVGTGRCFLTSQNHGFAVDADSLPAGWTPLFTNANDCSNEGIVHDSLPFFSVQFHPEHRAGPSDMELLFDVFLETVREAVAGNPGGQTVKERLVQRLCPPGLLIPGSGLPPPRKVLILGSGGLSIGQAGEFDYSGSQAIKALKEENIQTLLINPNIATVQTSQGLADKVYFLPITPHYVTQVIRNERPDGVLLTFGGQTALNCGVELTKAGVLARYGVRVLGTPVETIELTEDRRAFAARMAEIGEHVAPSEAANSLEQAQAAAERLGYPVLVRAAFALGGLGSGFASTKEELSALVAPAFAHTSQVLIDKSLKGWKEIEYEVVRDAYGNCVTVCNMENLDPLGIHTGESIVVAPSQTLNDREYQLLRRTAIKVTQHLGIVGECNVQYALNPESEQYYIIEVNARLSRSSALASKATGYPLAYVAAKLALGIPLPELRNSVTGGTAAFEPSLDYCVVKIPRWDLSKFLRVSTKIGSCMKSVGEVMGIGRSFEEAFQKALRMVDENCVGFDHTVKPVSDVELETPTDKRIFVVAAALWAGYSVERLYELTRIDCWFLHRMKRIVTHAQLLEQHRGQPLSQDLLHQAKCLGFSDKQIALAVLSTELAVRKLRQELGICPAVKQIDTVAAEWPAQTNYLYLTYWGNTHDLDFRTPHVLVLGSGVYRIGSSVEFDWCAVGCIQQLRKMGYKTIMVNYNPETVSTDYDMCDRLYFDEISFEVVMDIYELENPDGVILSMGGQLPNNMAMALHRQQCRVLGTSPEAIDSAENRFKFSRLLDTIGISQPQWRELSDLESARQFCQTVGYPCVVRPSYVLSGAAMNVAYTDGDLERFLSSAAAVSKEHPVVISKFIQEAKEIDVDAVACDGVVSAIAISEHVENAGVHSGDATLVTPPQDITPKTLERIKAIVHAVGQELQVTGPFNLQLIAKDDQLKVIECNVRVSRSFPFVSKTLGVDLVALATRIIMGEKVEPIGLMTGSGVVGVKVPQFSFSRLAGADVVLGVEMTSTGEVAGFGESRCEAYLKAMLSTGFKIPKKNILLTIGSYKNKSELLPTVRLLESLGYSLYASLGTADFYTEHGVKVTAVDWHFEEAVDGECPPQRSILDQLAENHFELVINLSMRGAGGRRLSSFVTKGYRTRRLAADFSVPLIIDIKCTKLFVEALGQIGPAPPLKVHVDCMTSQKLVRLPGLIDVHVHLREPGGTHKEDFASGTAAALAGGVTMVCAMPNTRPPIIDAPALALAQKLAEAGARCDFALFLGASSENAGTLGAVAGSAAGLKLYLNETFSELRLDSVAQWMEHFETWPSHLPIVAHAERQSVAAVLMVAQLTQRPVHICHVARKEEILLIKTAKAQGLPVTCEVAPHHLFLNREDLERLGPGRGEVRPELGSREDMEALWENMAVIDCFASDHAPHTLEEKCGPKPPPGFPGLETMLPLLLTAVSEGRLSLDDLLQRLHHNPRRIFHLPLQEDTYVEVDLEHEWTIPSHMPFSKARWTPFEGQKVKGTIRRVVLRGEVAYIDGQVLVPPGYGQDVRKWPQGAVPQPPPSAPATTEITTTPERPRRVIPGLPDGRFHLPPRIHRASDPGLPAEEPKEKPSRKVVEPELMGTPDGPCYPAPPVPRQASPQNLGSSGLLHPQTSPLLHSLVGQHILSVKQFTKDQMSHLFNVAHTLRMMVQKERSLDILKGKVMASMFYEVSTRTSSSFAAAMARLGGAVLSFSEATSSVQKGESLADSVQTMSCYADVVVLRHPQPGAVELAAKHCRRPVINAGDGVGEHPTQALLDIFTIREELGTVNGMTITMVGDLKHGRTVHSLACLLTQYRVSLRYVAPPSLRMPPSVWDFVASRGTKQEEFESIEEALPDTDVLYMTRIQKERFGSTQEYEACFGQFILTPHIMTRAKKKMVVMHPMPRVNEISVEVDSDPRAAYFRQAENGMYIRMALLATVLGRF.

Residue Ala2 is modified to N-acetylalanine. The GATase (Glutamine amidotransferase) stretch occupies residues 2 to 365; the sequence is AALVLEDGSV…TVREAVAGNP (364 aa). L-glutamine contacts are provided by Ser44, Gly222, and Gly224. Residues 177 to 363 form the Glutamine amidotransferase type-1 domain; sequence RICALDCGLK…LETVREAVAG (187 aa). Catalysis depends on Cys252, which acts as the Nucleophile; for GATase activity. L-glutamine is bound by residues Leu253, Gln256, Asn294, Gly296, and Phe297. Active-site for GATase activity residues include His336 and Glu338. Residues 366–394 form a linker region; the sequence is GGQTVKERLVQRLCPPGLLIPGSGLPPPR. Residues 395-933 form a CPSase A region; it reads KVLILGSGGL…NTHDLDFRTP (539 aa). The CPSase (Carbamoyl phosphate synthase) stretch occupies residues 395–1455; sequence KVLILGSGGL…APPLKVHVDC (1061 aa). Thr456 carries the phosphothreonine; by MAPK1 modification. Positions 515, 555, 561, 562, 592, 599, 625, 626, 627, 668, and 682 each coordinate ATP. In terms of domain architecture, ATP-grasp 1 spans 519–711; it reads AARMAEIGEH…LAYVAAKLAL (193 aa). Mg(2+) is bound by residues Gln668, Glu682, and Asn684. Residues Gln668, Glu682, and Asn684 each coordinate Mn(2+). Position 747 is an N6-acetyllysine (Lys747). Positions 934–1455 are CPSase B; it reads HVLVLGSGVY…APPLKVHVDC (522 aa). Ser1038 is modified (phosphoserine). Positions 1052-1243 constitute an ATP-grasp 2 domain; it reads SRLLDTIGIS…LVALATRIIM (192 aa). 10 residues coordinate ATP: Arg1088, Lys1127, Ile1129, Glu1134, Gly1159, Val1160, His1161, Ser1162, Gln1202, and Glu1214. Gln1202, Glu1214, and Asn1216 together coordinate Mg(2+). Mn(2+)-binding residues include Gln1202, Glu1214, and Asn1216. The 155-residue stretch at 1308–1462 folds into the MGS-like domain; that stretch reads FKIPKKNILL…VDCMTSQKLV (155 aa). Phosphoserine; by PKA is present on Ser1406. Lys1411 carries the post-translational modification N6-acetyllysine. A DHOase (dihydroorotase) region spans residues 1456–1788; it reads MTSQKLVRLP…VKGTIRRVVL (333 aa). Zn(2+) is bound by residues His1471 and His1473. Residues Arg1475 and Asn1505 each coordinate (S)-dihydroorotate. Residues Lys1556, His1590, Cys1613, His1614, and Glu1637 each coordinate Zn(2+). At Lys1556 the chain carries N6-carboxylysine. (S)-dihydroorotate is bound at residue Arg1661. Position 1686 (Asp1686) interacts with Zn(2+). The active-site For DHOase activity is Asp1686. Residues His1690 and Pro1702 each coordinate (S)-dihydroorotate. The tract at residues 1789-1917 is linker; that stretch reads RGEVAYIDGQ…GLLHPQTSPL (129 aa). The disordered stretch occupies residues 1813–1911; sequence PQGAVPQPPP…QNLGSSGLLH (99 aa). Positions 1825–1834 are enriched in low complexity; the sequence is PATTEITTTP. The residue at position 1859 (Ser1859) is a Phosphoserine; by RPS6KB1 and PKA. The segment covering 1866-1878 has biased composition (basic and acidic residues); sequence EEPKEKPSRKVVE. Ser1873 bears the Phosphoserine; by PKC; in vitro mark. The residue at position 1884 (Thr1884) is a Phosphothreonine. Residues 1899–1911 are compositionally biased toward polar residues; it reads ASPQNLGSSGLLH. A phosphoserine mark is found at Ser1900 and Ser1938. The ATCase (Aspartate transcarbamylase) stretch occupies residues 1918 to 2225; it reads LHSLVGQHIL…ALLATVLGRF (308 aa). Residues Arg1975 and Thr1976 each contribute to the carbamoyl phosphate site. Lys2003 contributes to the L-aspartate binding site. Arg2024, His2052, and Gln2055 together coordinate carbamoyl phosphate. Positions 2085 and 2146 each coordinate L-aspartate. Carbamoyl phosphate-binding residues include Met2185 and Pro2186.

This sequence in the N-terminal section; belongs to the CarA family. The protein in the 2nd section; belongs to the CarB family. It in the 3rd section; belongs to the metallo-dependent hydrolases superfamily. DHOase family. CAD subfamily. In the C-terminal section; belongs to the aspartate/ornithine carbamoyltransferase superfamily. ATCase family. In terms of assembly, homohexamer. Interacts with CIPC. Zn(2+) is required as a cofactor. It depends on Mg(2+) as a cofactor. Requires Mn(2+) as cofactor. Post-translationally, activated by MAP kinase (Erk1/2) phosphorylation just prior to the S phase of the cell cycle, when the demand for pyrimidine nucleotides is greatest, and down-regulated as the cells emerge from S phase by protein kinase A (PKA) phosphorylation. Phosphorylation at Ser-1859 by RPS6KB1 downstream of MTOR promotes oligomerization and stimulates dihydroorotase activity. Phosphorylation at Ser-1406 reduces sensitivity to feedback inhibition by UTP.

The protein localises to the cytoplasm. It localises to the nucleus. It catalyses the reaction hydrogencarbonate + L-glutamine + 2 ATP + H2O = carbamoyl phosphate + L-glutamate + 2 ADP + phosphate + 2 H(+). The enzyme catalyses L-glutamine + H2O = L-glutamate + NH4(+). The catalysed reaction is hydrogencarbonate + NH4(+) + 2 ATP = carbamoyl phosphate + 2 ADP + phosphate + 2 H(+). It carries out the reaction carbamoyl phosphate + L-aspartate = N-carbamoyl-L-aspartate + phosphate + H(+). It catalyses the reaction (S)-dihydroorotate + H2O = N-carbamoyl-L-aspartate + H(+). Its pathway is pyrimidine metabolism; UMP biosynthesis via de novo pathway; (S)-dihydroorotate from bicarbonate: step 1/3. The protein operates within pyrimidine metabolism; UMP biosynthesis via de novo pathway; (S)-dihydroorotate from bicarbonate: step 2/3. It participates in pyrimidine metabolism; UMP biosynthesis via de novo pathway; (S)-dihydroorotate from bicarbonate: step 3/3. Its activity is regulated as follows. Allosterically regulated and controlled by phosphorylation. 5-phosphoribose 1-diphosphate (PRPP) is an activator while UMP and UTP are inhibitors of the CPSase reaction. Its function is as follows. Multifunctional protein that encodes the first 3 enzymatic activities of the de novo pyrimidine pathway: carbamoylphosphate synthetase (CPSase; EC 6.3.5.5), aspartate transcarbamylase (ATCase; EC 2.1.3.2) and dihydroorotase (DHOase; EC 3.5.2.3). The CPSase-function is accomplished in 2 steps, by a glutamine-dependent amidotransferase activity (GATase) that binds and cleaves glutamine to produce ammonia, followed by an ammonium-dependent carbamoyl phosphate synthetase, which reacts with the ammonia, hydrogencarbonate and ATP to form carbamoyl phosphate. The endogenously produced carbamoyl phosphate is sequestered and channeled to the ATCase active site. ATCase then catalyzes the formation of carbamoyl-L-aspartate from L-aspartate and carbamoyl phosphate. In the last step, DHOase catalyzes the cyclization of carbamoyl aspartate to dihydroorotate. The chain is Multifunctional protein CAD (CAD) from Mesocricetus auratus (Golden hamster).